Consider the following 202-residue polypeptide: dTTP/UTP pyrophosphatase (202 aa).

Catalysis depends on aspartate 83, which acts as the Proton acceptor.

Belongs to the Maf family. YhdE subfamily. A divalent metal cation serves as cofactor.

It localises to the cytoplasm. It catalyses the reaction dTTP + H2O = dTMP + diphosphate + H(+). The enzyme catalyses UTP + H2O = UMP + diphosphate + H(+). Nucleoside triphosphate pyrophosphatase that hydrolyzes dTTP and UTP. May have a dual role in cell division arrest and in preventing the incorporation of modified nucleotides into cellular nucleic acids. The chain is dTTP/UTP pyrophosphatase from Polaromonas sp. (strain JS666 / ATCC BAA-500).